The following is a 181-amino-acid chain: Glutamyl-tRNA(Gln) amidotransferase subunit C, chloroplastic/mitochondrial (181 aa).

The protein belongs to the GatC family. In terms of assembly, subunit of the heterotrimeric GatCAB amidotransferase (AdT) complex, composed of A, B and C subunits.

It localises to the mitochondrion. The protein localises to the plastid. Its subcellular location is the chloroplast. The catalysed reaction is L-glutamyl-tRNA(Gln) + L-glutamine + ATP + H2O = L-glutaminyl-tRNA(Gln) + L-glutamate + ADP + phosphate + H(+). Functionally, allows the formation of correctly charged Gln-tRNA(Gln) through the transamidation of misacylated Glu-tRNA(Gln) in chloroplasts and mitochondria. The reaction takes place in the presence of glutamine and ATP through an activated gamma-phospho-Glu-tRNA(Gln). This chain is Glutamyl-tRNA(Gln) amidotransferase subunit C, chloroplastic/mitochondrial, found in Picea sitchensis (Sitka spruce).